The sequence spans 168 residues: Ribosome maturation factor RimP (168 aa).

The protein belongs to the RimP family.

It is found in the cytoplasm. In terms of biological role, required for maturation of 30S ribosomal subunits. The chain is Ribosome maturation factor RimP from Rickettsia bellii (strain OSU 85-389).